The following is a 263-amino-acid chain: Imidazole glycerol phosphate synthase subunit HisF (263 aa).

Catalysis depends on residues Asp11 and Asp130.

This sequence belongs to the HisA/HisF family. In terms of assembly, heterodimer of HisH and HisF.

The protein localises to the cytoplasm. It catalyses the reaction 5-[(5-phospho-1-deoxy-D-ribulos-1-ylimino)methylamino]-1-(5-phospho-beta-D-ribosyl)imidazole-4-carboxamide + L-glutamine = D-erythro-1-(imidazol-4-yl)glycerol 3-phosphate + 5-amino-1-(5-phospho-beta-D-ribosyl)imidazole-4-carboxamide + L-glutamate + H(+). It participates in amino-acid biosynthesis; L-histidine biosynthesis; L-histidine from 5-phospho-alpha-D-ribose 1-diphosphate: step 5/9. In terms of biological role, IGPS catalyzes the conversion of PRFAR and glutamine to IGP, AICAR and glutamate. The HisF subunit catalyzes the cyclization activity that produces IGP and AICAR from PRFAR using the ammonia provided by the HisH subunit. The chain is Imidazole glycerol phosphate synthase subunit HisF from Synechococcus sp. (strain CC9311).